We begin with the raw amino-acid sequence, 351 residues long: Ferrochelatase (351 aa).

Fe cation is bound by residues His220 and Glu301.

This sequence belongs to the ferrochelatase family.

The protein resides in the cytoplasm. It carries out the reaction heme b + 2 H(+) = protoporphyrin IX + Fe(2+). It functions in the pathway porphyrin-containing compound metabolism; protoheme biosynthesis; protoheme from protoporphyrin-IX: step 1/1. In terms of biological role, catalyzes the ferrous insertion into protoporphyrin IX. The polypeptide is Ferrochelatase (Rhodobacter capsulatus (Rhodopseudomonas capsulata)).